An 833-amino-acid chain; its full sequence is Probable glucan 1,3-beta-glucosidase D (833 aa).

Basic and acidic residues predominate over residues 1–33 (MPTHSRSRDRYGGRDSDREARYDYDYARRRYAT). Residues 1 to 228 (MPTHSRSRDR…RKRQKKLAVV (228 aa)) form a disordered region. Over 1-305 (MPTHSRSRDR…GGRPFWKRKR (305 aa)) the chain is Cytoplasmic. A compositionally biased stretch (acidic residues) spans 34 to 45 (DDDDDYDDDELE). Basic and acidic residues-rich tracts occupy residues 46 to 75 (HDLT…RDAE) and 97 to 172 (YGDD…ETAA). Residues 183–196 (SASHLLSADALAKL) are compositionally biased toward low complexity. The span at 200-217 (YEKEERRKREIAKDAAKA) shows a compositional bias: basic and acidic residues. Residues 306–326 (WIGLGALIIILVIVIPVAVVV) traverse the membrane as a helical; Signal-anchor for type II membrane protein segment. The Extracellular segment spans residues 327–833 (SKKHDNKSDP…PDFGDLPEYY (507 aa)). Residues 331–353 (DNKSDPADSQGTSPGKSNLDGLS) are disordered. Asn332 is a glycosylation site (N-linked (GlcNAc...) asparagine). Over residues 337-346 (ADSQGTSPGK) the composition is skewed to polar residues. N-linked (GlcNAc...) asparagine glycans are attached at residues Asn378, Asn383, Asn395, Asn548, Asn560, and Asn569. The active-site Proton donor is Glu599. Residues Asn638, Asn671, and Asn691 are each glycosylated (N-linked (GlcNAc...) asparagine). The active-site Nucleophile is the Glu704.

This sequence belongs to the glycosyl hydrolase 5 (cellulase A) family.

Its subcellular location is the cell membrane. The catalysed reaction is Successive hydrolysis of beta-D-glucose units from the non-reducing ends of (1-&gt;3)-beta-D-glucans, releasing alpha-glucose.. Glucosidase involved in the degradation of cellulosic biomass. Active on lichenan. The polypeptide is Probable glucan 1,3-beta-glucosidase D (exgD) (Aspergillus fumigatus (strain CBS 144.89 / FGSC A1163 / CEA10) (Neosartorya fumigata)).